A 347-amino-acid chain; its full sequence is Haptoglobin (347 aa).

Positions 1-18 (MRALGAVVTLLLWGQLFA) are cleaved as a signal peptide. In terms of domain architecture, Sushi spans 31–88 (DSCPKPPEIANGYVEHLVRYRCRQFYRLRTEGDGVYTLNDEKQWVNTAAGEKLPECEA). Cystine bridges form between Cys-52-Cys-86, Cys-90-Cys-207, Cys-250-Cys-281, and Cys-292-Cys-322. In terms of domain architecture, Peptidase S1 spans 103-345 (IIGGSMDAKG…LKDWVQETMA (243 aa)). N-linked (GlcNAc...) asparagine glycans are attached at residues Asn-148, Asn-182, Asn-256, and Asn-264. The segment at 259-264 (VPEKKN) is interaction with CD163.

This sequence belongs to the peptidase S1 family. Tetramer of two alpha and two beta chains; disulfide-linked. The hemoglobin/haptoglobin complex is composed of a haptoglobin dimer bound to two hemoglobin alpha-beta dimers. Interacts with CD163. Interacts with ERGIC3. As to expression, expressed by the liver and secreted in plasma.

The protein resides in the secreted. Functionally, as a result of hemolysis, hemoglobin is found to accumulate in the kidney and is secreted in the urine. Haptoglobin captures, and combines with free plasma hemoglobin to allow hepatic recycling of heme iron and to prevent kidney damage. Haptoglobin also acts as an antioxidant, has antibacterial activity and plays a role in modulating many aspects of the acute phase response. Hemoglobin/haptoglobin complexes are rapidly cleared by the macrophage CD163 scavenger receptor expressed on the surface of liver Kupfer cells through an endocytic lysosomal degradation pathway. The protein is Haptoglobin (Hp) of Mus saxicola (Brown spiny mouse).